Here is a 485-residue protein sequence, read N- to C-terminus: Glutamate--tRNA ligase (485 aa).

Residues 11 to 21 carry the 'HIGH' region motif; it reads PSPTGHLHIGN. The 'KMSKS' region motif lies at 252 to 256; that stretch reads KLSKR. Residue K255 coordinates ATP.

This sequence belongs to the class-I aminoacyl-tRNA synthetase family. Glutamate--tRNA ligase type 1 subfamily. In terms of assembly, monomer.

The protein localises to the cytoplasm. The enzyme catalyses tRNA(Glu) + L-glutamate + ATP = L-glutamyl-tRNA(Glu) + AMP + diphosphate. In terms of biological role, catalyzes the attachment of glutamate to tRNA(Glu) in a two-step reaction: glutamate is first activated by ATP to form Glu-AMP and then transferred to the acceptor end of tRNA(Glu). The sequence is that of Glutamate--tRNA ligase from Bacillus mycoides (strain KBAB4) (Bacillus weihenstephanensis).